A 542-amino-acid chain; its full sequence is CTP synthase (542 aa).

The segment at 1-265 is amidoligase domain; the sequence is MTRYIFVTGG…DDFVVERFGL (265 aa). Serine 13 contacts CTP. Residue serine 13 coordinates UTP. ATP-binding positions include 14–19 and aspartate 71; that span reads SLGKGI. Residues aspartate 71 and glutamate 139 each coordinate Mg(2+). CTP-binding positions include 146-148, 186-191, and lysine 222; these read DIE and KTKPTQ. Residues 186 to 191 and lysine 222 contribute to the UTP site; that span reads KTKPTQ. Positions 290–541 constitute a Glutamine amidotransferase type-1 domain; that stretch reads TIAMVGKYME…VKAALAQKNK (252 aa). Glycine 351 lines the L-glutamine pocket. Cysteine 378 (nucleophile; for glutamine hydrolysis) is an active-site residue. L-glutamine contacts are provided by residues 379-382, glutamate 402, and arginine 469; that span reads LGMQ. Residues histidine 514 and glutamate 516 contribute to the active site.

The protein belongs to the CTP synthase family. As to quaternary structure, homotetramer.

The catalysed reaction is UTP + L-glutamine + ATP + H2O = CTP + L-glutamate + ADP + phosphate + 2 H(+). It catalyses the reaction L-glutamine + H2O = L-glutamate + NH4(+). It carries out the reaction UTP + NH4(+) + ATP = CTP + ADP + phosphate + 2 H(+). The protein operates within pyrimidine metabolism; CTP biosynthesis via de novo pathway; CTP from UDP: step 2/2. With respect to regulation, allosterically activated by GTP, when glutamine is the substrate; GTP has no effect on the reaction when ammonia is the substrate. The allosteric effector GTP functions by stabilizing the protein conformation that binds the tetrahedral intermediate(s) formed during glutamine hydrolysis. Inhibited by the product CTP, via allosteric rather than competitive inhibition. In terms of biological role, catalyzes the ATP-dependent amination of UTP to CTP with either L-glutamine or ammonia as the source of nitrogen. Regulates intracellular CTP levels through interactions with the four ribonucleotide triphosphates. This Pseudomonas entomophila (strain L48) protein is CTP synthase.